A 212-amino-acid chain; its full sequence is ATP phosphoribosyltransferase (212 aa).

Belongs to the ATP phosphoribosyltransferase family. Short subfamily. In terms of assembly, heteromultimer composed of HisG and HisZ subunits.

It localises to the cytoplasm. It carries out the reaction 1-(5-phospho-beta-D-ribosyl)-ATP + diphosphate = 5-phospho-alpha-D-ribose 1-diphosphate + ATP. The protein operates within amino-acid biosynthesis; L-histidine biosynthesis; L-histidine from 5-phospho-alpha-D-ribose 1-diphosphate: step 1/9. Functionally, catalyzes the condensation of ATP and 5-phosphoribose 1-diphosphate to form N'-(5'-phosphoribosyl)-ATP (PR-ATP). Has a crucial role in the pathway because the rate of histidine biosynthesis seems to be controlled primarily by regulation of HisG enzymatic activity. The sequence is that of ATP phosphoribosyltransferase from Prochlorococcus marinus (strain MIT 9515).